Reading from the N-terminus, the 426-residue chain is D-tagatose-1,6-bisphosphate aldolase subunit KbaZ (426 aa).

Belongs to the GatZ/KbaZ family. KbaZ subfamily. In terms of assembly, forms a complex with KbaY.

It participates in carbohydrate metabolism; D-tagatose 6-phosphate degradation; D-glyceraldehyde 3-phosphate and glycerone phosphate from D-tagatose 6-phosphate: step 2/2. Its function is as follows. Component of the tagatose-1,6-bisphosphate aldolase KbaYZ that is required for full activity and stability of the Y subunit. Could have a chaperone-like function for the proper and stable folding of KbaY. When expressed alone, KbaZ does not show any aldolase activity. This Escherichia coli (strain 55989 / EAEC) protein is D-tagatose-1,6-bisphosphate aldolase subunit KbaZ.